Here is a 310-residue protein sequence, read N- to C-terminus: Putative methyltransferase mtx subunit H (310 aa).

It belongs to the MtrH family. May be part of a complex composed of 3 subunits; MtxA, MtxH and MtxX.

This Methanosarcina acetivorans (strain ATCC 35395 / DSM 2834 / JCM 12185 / C2A) protein is Putative methyltransferase mtx subunit H (mtxH).